Consider the following 100-residue polypeptide: uncharacterized protein (100 aa).

The next 3 helical transmembrane spans lie at T7 to L28, A38 to I60, and L65 to V87.

Its subcellular location is the cell membrane. This is an uncharacterized protein from Archaeoglobus fulgidus (strain ATCC 49558 / DSM 4304 / JCM 9628 / NBRC 100126 / VC-16).